A 339-amino-acid chain; its full sequence is Ketol-acid reductoisomerase (NADP(+)) (339 aa).

The KARI N-terminal Rossmann domain occupies 1–182 (MKVYYDSDAD…GGGRSGVIET (182 aa)). NADP(+) is bound by residues 24 to 27 (YGSQ), Arg48, Ser51, Ser53, and 83 to 86 (DEHQ). Residue His108 is part of the active site. Residue Gly134 participates in NADP(+) binding. A KARI C-terminal knotted domain is found at 183-328 (TFREEVETDL…ARLRKMMPWI (146 aa)). 4 residues coordinate Mg(2+): Asp191, Glu195, Glu227, and Glu231. Ser252 contacts substrate.

This sequence belongs to the ketol-acid reductoisomerase family. Mg(2+) is required as a cofactor.

It catalyses the reaction (2R)-2,3-dihydroxy-3-methylbutanoate + NADP(+) = (2S)-2-acetolactate + NADPH + H(+). It carries out the reaction (2R,3R)-2,3-dihydroxy-3-methylpentanoate + NADP(+) = (S)-2-ethyl-2-hydroxy-3-oxobutanoate + NADPH + H(+). It participates in amino-acid biosynthesis; L-isoleucine biosynthesis; L-isoleucine from 2-oxobutanoate: step 2/4. Its pathway is amino-acid biosynthesis; L-valine biosynthesis; L-valine from pyruvate: step 2/4. Functionally, involved in the biosynthesis of branched-chain amino acids (BCAA). Catalyzes an alkyl-migration followed by a ketol-acid reduction of (S)-2-acetolactate (S2AL) to yield (R)-2,3-dihydroxy-isovalerate. In the isomerase reaction, S2AL is rearranged via a Mg-dependent methyl migration to produce 3-hydroxy-3-methyl-2-ketobutyrate (HMKB). In the reductase reaction, this 2-ketoacid undergoes a metal-dependent reduction by NADPH to yield (R)-2,3-dihydroxy-isovalerate. This chain is Ketol-acid reductoisomerase (NADP(+)), found in Zymomonas mobilis subsp. mobilis (strain ATCC 31821 / ZM4 / CP4).